The primary structure comprises 308 residues: D-alanine--D-alanine ligase (308 aa).

Positions 103-302 (KTVMKTAGVP…FDELVQWMVE (200 aa)) constitute an ATP-grasp domain. ATP is bound at residue 130–184 (MEPPYVIKPVADGSSVGVYIITEQHQHPPQELFRDDWAYGDKLLVEKYVAGKELT). Mg(2+) is bound by residues Asp252, Glu269, and Asn271.

This sequence belongs to the D-alanine--D-alanine ligase family. Requires Mg(2+) as cofactor. Mn(2+) is required as a cofactor.

The protein localises to the cytoplasm. The enzyme catalyses 2 D-alanine + ATP = D-alanyl-D-alanine + ADP + phosphate + H(+). Its pathway is cell wall biogenesis; peptidoglycan biosynthesis. In terms of biological role, cell wall formation. This is D-alanine--D-alanine ligase from Rhodopseudomonas palustris (strain BisA53).